The primary structure comprises 76 residues: Acyl carrier protein (76 aa).

The region spanning 1 to 76 is the Carrier domain; it reads MSVEEKVKKI…DAIDYVSNKQ (76 aa). O-(pantetheine 4'-phosphoryl)serine is present on serine 36.

Belongs to the acyl carrier protein (ACP) family. 4'-phosphopantetheine is transferred from CoA to a specific serine of apo-ACP by AcpS. This modification is essential for activity because fatty acids are bound in thioester linkage to the sulfhydryl of the prosthetic group.

It localises to the cytoplasm. It functions in the pathway lipid metabolism; fatty acid biosynthesis. Its function is as follows. Carrier of the growing fatty acid chain in fatty acid biosynthesis. The chain is Acyl carrier protein from Nitratidesulfovibrio vulgaris (strain ATCC 29579 / DSM 644 / CCUG 34227 / NCIMB 8303 / VKM B-1760 / Hildenborough) (Desulfovibrio vulgaris).